A 405-amino-acid polypeptide reads, in one-letter code: Transposase from transposon Tn1545 (405 aa).

One can recognise a Core-binding (CB) domain in the interval 79–163 (GKKMTLCQLY…SLKASFYIAI (85 aa)). The Tyr recombinase domain maps to 186 to 392 (VPKTVLTEEQ…TFDSAMAEMK (207 aa)). Active-site residues include R225, K264, H343, R346, and H369. Y379 serves as the catalytic O-(3'-phospho-DNA)-tyrosine intermediate.

This sequence belongs to the 'phage' integrase family.

The sequence is that of Transposase from transposon Tn1545 (int) from Streptococcus agalactiae serotype V (strain ATCC BAA-611 / 2603 V/R).